The primary structure comprises 300 residues: 4-hydroxy-tetrahydrodipicolinate synthase (300 aa).

Thr53 lines the pyruvate pocket. Tyr141 functions as the Proton donor/acceptor in the catalytic mechanism. Catalysis depends on Lys169, which acts as the Schiff-base intermediate with substrate. Thr211 is a pyruvate binding site.

Belongs to the DapA family. In terms of assembly, homotetramer; dimer of dimers.

Its subcellular location is the cytoplasm. It carries out the reaction L-aspartate 4-semialdehyde + pyruvate = (2S,4S)-4-hydroxy-2,3,4,5-tetrahydrodipicolinate + H2O + H(+). It functions in the pathway amino-acid biosynthesis; L-lysine biosynthesis via DAP pathway; (S)-tetrahydrodipicolinate from L-aspartate: step 3/4. Catalyzes the condensation of (S)-aspartate-beta-semialdehyde [(S)-ASA] and pyruvate to 4-hydroxy-tetrahydrodipicolinate (HTPA). The sequence is that of 4-hydroxy-tetrahydrodipicolinate synthase from Rickettsia massiliae (strain Mtu5).